We begin with the raw amino-acid sequence, 523 residues long: Thiamine pathway transporter THI73 (523 aa).

The Cytoplasmic segment spans residues 1 to 79; sequence MKNMSQRSMD…LSPKVLRKVD (79 aa). A helical membrane pass occupies residues 80–100; the sequence is LFILPFLCCTYLLMFLDKALL. Residues 101–118 lie on the Extracellular side of the membrane; that stretch reads NYAASMGIKDHLKGNEFS. Residues 119–139 form a helical membrane-spanning segment; the sequence is NLGTIFSAAYIFMEPVVTYLI. Topologically, residues 140-141 are cytoplasmic; that stretch reads QK. A helical membrane pass occupies residues 142-162; the sequence is FPISKILGTFITVWGIVLACH. Over 163–176 the chain is Extracellular; the sequence is AACKTYASLMVVRT. Residues 177 to 197 traverse the membrane as a helical segment; it reads LLGLFESSSAVGCIAISGMYY. Topologically, residues 198–207 are cytoplasmic; it reads TKSEQSARIG. A helical membrane pass occupies residues 208 to 228; the sequence is FWATQAGTGYIVGGLISFGFL. The Extracellular portion of the chain corresponds to 229–239; sequence HYHGTAFTSWQ. Residues 240-260 traverse the membrane as a helical segment; that stretch reads IMFLVVGLVTVAFGVLTFLYL. The Cytoplasmic segment spans residues 261-312; it reads PDNVTNAWFLNKEEKIQVVEHIRANQTGLETKKFKKQQVKELFLHDKFTWPM. The helical transmembrane segment at 313–333 threads the bilayer; that stretch reads LLLTACSQISTGAIGTFSVTI. Over 334–345 the chain is Extracellular; it reads TGTFGFDKYETA. A helical transmembrane segment spans residues 346 to 366; that stretch reads LLQLPIGAITAMIILITTQML. Over 367-371 the chain is Cytoplasmic; it reads SRWGH. Residues 372-392 form a helical membrane-spanning segment; sequence ITLITTSMYIPAIIGCIVLIS. The Extracellular portion of the chain corresponds to 393 to 400; it reads LPLSHKIG. A helical transmembrane segment spans residues 401–421; it reads NLFSLYLLYSGSCVITNIYIW. Topologically, residues 422 to 432 are cytoplasmic; the sequence is NSCNTSGYTKR. A helical transmembrane segment spans residues 433–452; the sequence is VFRNAITMIVYNVSCIIAPQ. Topologically, residues 453–466 are extracellular; that stretch reads MFRAYSAPRYIPAK. A helical membrane pass occupies residues 467–487; that stretch reads IALLVTQCVCVPLQLYIGYIC. At 488-523 the chain is on the cytoplasmic side; it reads KKENEKRDKEQEGQERKKYQFLDLTDIENRNFRYIY.

This sequence belongs to the major facilitator superfamily. Allantoate permease family.

The protein localises to the endoplasmic reticulum membrane. Its subcellular location is the cell membrane. Its function is as follows. Transports either thiamine or, rather, a related metabolite involved in the thiamine biosynthesis pathway. This is Thiamine pathway transporter THI73 (THI73) from Saccharomyces cerevisiae (strain ATCC 204508 / S288c) (Baker's yeast).